Reading from the N-terminus, the 1470-residue chain is Histone acetyltransferase HAC4 (1470 aa).

Positions 1–10 (MNNNKEVPQN) are enriched in polar residues. Disordered stretches follow at residues 1-20 (MNNN…SSSA) and 342-376 (TNFQ…HSQN). The span at 11–20 (SVAVSSSSSA) shows a compositional bias: low complexity. Positions 342-365 (TNFQSAPNNRDNLPQVSQQLSNHG) are enriched in polar residues. The TAZ-type 1 zinc-finger motif lies at 416-495 (GQTSSNTVLR…SISCRTCVAV (80 aa)). The disordered stretch occupies residues 518-566 (SSKCQPKKSSKSRQAYKKGGAEAPSVDADLQRSIKRPKLHRPSQNITPE). The segment covering 522 to 533 (QPKKSSKSRQAY) has biased composition (basic residues). The segment at 764 to 841 (HYVCAPCYNE…KYTCPSCYIQ (78 aa)) adopts a PHD-type zinc-finger fold. Residues 856–1293 (VPGATSLPVT…ILYHLHNPTA (438 aa)) form the CBP/p300-type HAT domain. Acetyl-CoA contacts are provided by residues 979-981 (LDS), 998-999 (RT), and Trp-1054. ZZ-type zinc fingers lie at residues 1175-1238 (HLQH…IKDV) and 1295-1347 (AFAT…SSTD). Zn(2+) contacts are provided by Cys-1180, Cys-1183, Cys-1195, Cys-1198, Cys-1204, Cys-1207, His-1220, His-1228, Cys-1300, Cys-1303, Cys-1315, Cys-1318, Cys-1324, Cys-1327, His-1335, and His-1337. The TAZ-type 2 zinc finger occupies 1358–1436 (SQSYQVKLEK…KCTVPKCSGL (79 aa)).

In terms of tissue distribution, rosette leaves, stems and flowers.

It is found in the nucleus. The enzyme catalyses L-lysyl-[protein] + acetyl-CoA = N(6)-acetyl-L-lysyl-[protein] + CoA + H(+). Functionally, acetyltransferase enzyme. Acetylates histones, giving a specific tag for transcriptional activation. This chain is Histone acetyltransferase HAC4 (HAC4), found in Arabidopsis thaliana (Mouse-ear cress).